Here is a 218-residue protein sequence, read N- to C-terminus: Urease accessory protein UreG (218 aa).

22–29 (GPVGSGKT) contacts GTP.

Belongs to the SIMIBI class G3E GTPase family. UreG subfamily. As to quaternary structure, homodimer. UreD, UreF and UreG form a complex that acts as a GTP-hydrolysis-dependent molecular chaperone, activating the urease apoprotein by helping to assemble the nickel containing metallocenter of UreC. The UreE protein probably delivers the nickel.

It localises to the cytoplasm. Functionally, facilitates the functional incorporation of the urease nickel metallocenter. This process requires GTP hydrolysis, probably effectuated by UreG. In Polaromonas naphthalenivorans (strain CJ2), this protein is Urease accessory protein UreG.